The sequence spans 184 residues: Large ribosomal subunit protein bL9 (184 aa).

The segment at 156 to 184 (RQAKLQNQKSEQQEAEQDASKEAADADDS) is disordered. Basic and acidic residues predominate over residues 173 to 184 (DASKEAADADDS).

The protein belongs to the bacterial ribosomal protein bL9 family.

Binds to the 23S rRNA. The protein is Large ribosomal subunit protein bL9 of Wolbachia pipientis subsp. Culex pipiens (strain wPip).